Here is a 331-residue protein sequence, read N- to C-terminus: Pseudouridylate synthase TRUB2, mitochondrial (331 aa).

Aspartate 98 serves as the catalytic Nucleophile. A disordered region spans residues 309–331; sequence STGQPWGLKDPSSTLELESCSGQ. The span at 319-331 shows a compositional bias: polar residues; that stretch reads PSSTLELESCSGQ.

It belongs to the pseudouridine synthase TruB family. In terms of assembly, forms a regulatory protein-RNA complex, consisting of RCC1L, NGRN, RPUSD3, RPUSD4, TRUB2, FASTKD2 and 16S mt-rRNA.

The protein resides in the mitochondrion matrix. It carries out the reaction a uridine in mRNA = a pseudouridine in mRNA. The enzyme catalyses uridine(55) in tRNA = pseudouridine(55) in tRNA. In terms of biological role, minor enzyme contributing to the isomerization of uridine to pseudouridine (pseudouridylation) of specific mitochondrial mRNAs (mt-mRNAs) such as COXI and COXIII mt-mRNAs. As a component of a functional protein-RNA module, consisting of RCC1L, NGRN, RPUSD3, RPUSD4, TRUB2, FASTKD2 and 16S mitochondrial ribosomal RNA (16S mt-rRNA), controls 16S mt-rRNA abundance and is required for intra-mitochondrial translation. Also catalyzes pseudouridylation of some tRNAs, including synthesis of pseudouridine(55) from uracil-55, in the psi GC loop of a subset of tRNAs. The protein is Pseudouridylate synthase TRUB2, mitochondrial of Mus musculus (Mouse).